The primary structure comprises 290 residues: MKNTFSRLFGFGDKESEFELQDESHEEIDKKVYEEIQEIPIVNITPNRYQPRTVFDDARIEELALTIRTHGLIQPIVVRQYEDDKYEIIAGERRFRAATKLGWEKVPAIIKNLNDTETASVALIENLQREELTAIEEAVAYQKLIELHNLTQEALAQRLGKGQSTIANKLRLLKLPEEIKSALLEKSITERHARALIPLKNEELQLKVLQEIVEKQLNVKQTEERITKLLEEAKPKRKAKQKAVSRDTRIAMNTIRQSLQMVADSGLNVNSEEEEFDEYYQITIQIPKKK.

Positions 153-172 form a DNA-binding region, H-T-H motif; that stretch reads EALAQRLGKGQSTIANKLRL.

Belongs to the ParB family.

It localises to the cytoplasm. It is found in the nucleoid. Its function is as follows. Effects nucleoid occlusion by binding relatively nonspecifically to DNA and preventing the assembly of the division machinery in the vicinity of the nucleoid, especially under conditions that disturb the cell cycle. It helps to coordinate cell division and chromosome segregation by preventing the formation of the Z ring through the nucleoid, which would cause chromosome breakage. The chain is Nucleoid occlusion protein from Bacillus anthracis (strain A0248).